The sequence spans 212 residues: Thymidylate kinase (212 aa).

Residue 7 to 14 (GIEGCGKS) participates in ATP binding.

The protein belongs to the thymidylate kinase family.

It carries out the reaction dTMP + ATP = dTDP + ADP. Functionally, phosphorylation of dTMP to form dTDP in both de novo and salvage pathways of dTTP synthesis. The polypeptide is Thymidylate kinase (Trichlorobacter lovleyi (strain ATCC BAA-1151 / DSM 17278 / SZ) (Geobacter lovleyi)).